A 165-amino-acid chain; its full sequence is GTPase activating protein 1 (165 aa).

Residues 1–105 (MLGHLVGLVK…VVKMKIEGVA (105 aa)) form the C2 domain. Ca(2+) contacts are provided by Arg22, Asp23, Asp28, Asp74, Lys75, Asp76, and Asp81.

It belongs to the plant CAR protein family. As to quaternary structure, binds to PYR/PYL/RCAR abscisic acid intracellular receptors in an ABA-independent manner, both at the plasma membrane and in the nucleus. Binds phospholipids in a Ca(2+)-dependent manner. Interacts with YchF1.

The protein localises to the cell membrane. It localises to the nucleus. The protein resides in the cytoplasm. Its subcellular location is the cytosol. In terms of biological role, mediates the transient calcium-dependent interaction of PYR/PYL/RCAR abscisic acid (ABA) receptors with the plasma membrane and thus regulates ABA sensitivity. Stimulates the GTPase/ATPase activities of YchF1, and regulates its subcellular localization. Promotes tolerance towards salinity stress by limiting the accumulation of reactive oxygen species (ROS). Promotes resistance to bacterial pathogens. The chain is GTPase activating protein 1 from Oryza sativa subsp. indica (Rice).